A 207-amino-acid chain; its full sequence is Cytochrome c oxidase subunit 3 (207 aa).

Transmembrane regions (helical) follow at residues 30–50 (FWLF…TFLA), 67–87 (VTLV…SVYA), 101–121 (LWLG…IYEF), 144–164 (LVGT…TLMI), and 186–206 (WHFI…MGMV).

It belongs to the cytochrome c oxidase subunit 3 family.

It is found in the cell membrane. The enzyme catalyses 4 Fe(II)-[cytochrome c] + O2 + 8 H(+)(in) = 4 Fe(III)-[cytochrome c] + 2 H2O + 4 H(+)(out). The chain is Cytochrome c oxidase subunit 3 (ctaE) from Bacillus subtilis (strain 168).